The primary structure comprises 988 residues: Band 4.1-like protein 2 (988 aa).

The interval 1 to 190 is disordered; that stretch reads MTTEVGSASE…GAAKRETKEV (190 aa). Position 2 is an N-acetylthreonine (Thr-2). Ser-7 is modified (phosphoserine). Basic and acidic residues predominate over residues 22 to 31; that stretch reads ASKEKAKEVE. Phosphoserine is present on residues Ser-38, Ser-86, and Ser-116. Composition is skewed to basic and acidic residues over residues 110-148 and 160-190; these read ILGK…EAKP and EEVR…TKEV. A phosphoserine mark is found at Ser-201, Ser-379, Ser-395, Ser-492, Ser-543, Ser-555, Ser-561, and Ser-582. Positions 211 to 492 constitute an FERM domain; it reads VLAKVTLLDG…EHHTFYRLVS (282 aa). A hydrophilic region spans residues 495–651; sequence QPPKTKFLTL…TPEPRPSEWE (157 aa). Residues 514–594 form a disordered region; that stretch reads TQAQTREAST…KATPLPAEGK (81 aa). A compositionally biased stretch (low complexity) spans 555 to 567; it reads SPPGEGSVPGPGV. Tyr-606 carries the post-translational modification Phosphotyrosine. Ser-610 and Ser-630 each carry phosphoserine. Disordered regions lie at residues 639–788 and 804–839; these read MAST…QAGA and QKLP…VPHL. A spectrin--actin-binding region spans residues 652-837; the sequence is KRRVTPLPFQ…DPHRVNGEVP (186 aa). Basic and acidic residues predominate over residues 673-686; that stretch reads VEEKKRAEVGKDES. Phosphoserine is present on Ser-698. A compositionally biased stretch (basic and acidic residues) spans 704–717; the sequence is GETRKVEPVAHKDS. Low complexity predominate over residues 718 to 729; it reads TSLSSESSSSSS. A compositionally biased stretch (basic and acidic residues) spans 739-751; the sequence is QPHHRVTEGTIRE. Phosphothreonine is present on Thr-745. The span at 752–764 shows a compositional bias: acidic residues; it reads EQEECDEELEEEP. Over residues 828–839 the composition is skewed to basic and acidic residues; that stretch reads DPHRVNGEVPHL. The C-terminal (CTD) stretch occupies residues 838-988; sequence HLDLDGLPEI…ETELAEEGEE (151 aa).

As to quaternary structure, interacts with FCGR1A. Interacts with TRPC4. Interacts (via CTD domain) with FKBP2. Interacts with NUMA1; this interaction is negatively regulated by CDK1 during metaphase and promotes anaphase-specific localization of NUMA1 in symmetrically dividing cells. In terms of tissue distribution, widely expressed.

Its subcellular location is the cytoplasm. The protein resides in the cytoskeleton. The protein localises to the cell cortex. It localises to the cell membrane. Required for dynein-dynactin complex and NUMA1 recruitment at the mitotic cell cortex during anaphase. This Mus musculus (Mouse) protein is Band 4.1-like protein 2.